A 195-amino-acid polypeptide reads, in one-letter code: Thymidine kinase (195 aa).

Residues 9–16 (STMNAGKS) and 87–90 (DEAQ) contribute to the ATP site. Glu-88 serves as the catalytic Proton acceptor. Zn(2+) is bound by residues Cys-145, Cys-147, Cys-182, and His-185.

The protein belongs to the thymidine kinase family. Homotetramer.

It is found in the cytoplasm. The catalysed reaction is thymidine + ATP = dTMP + ADP + H(+). This Mannheimia succiniciproducens (strain KCTC 0769BP / MBEL55E) protein is Thymidine kinase.